A 311-amino-acid chain; its full sequence is tRNA-cytidine(32) 2-sulfurtransferase (311 aa).

The short motif at 47–52 (SGGKDS) is the PP-loop motif element. 3 residues coordinate [4Fe-4S] cluster: cysteine 122, cysteine 125, and cysteine 213.

It belongs to the TtcA family. In terms of assembly, homodimer. Mg(2+) serves as cofactor. Requires [4Fe-4S] cluster as cofactor.

The protein localises to the cytoplasm. It catalyses the reaction cytidine(32) in tRNA + S-sulfanyl-L-cysteinyl-[cysteine desulfurase] + AH2 + ATP = 2-thiocytidine(32) in tRNA + L-cysteinyl-[cysteine desulfurase] + A + AMP + diphosphate + H(+). The protein operates within tRNA modification. Catalyzes the ATP-dependent 2-thiolation of cytidine in position 32 of tRNA, to form 2-thiocytidine (s(2)C32). The sulfur atoms are provided by the cysteine/cysteine desulfurase (IscS) system. The polypeptide is tRNA-cytidine(32) 2-sulfurtransferase (Shigella flexneri serotype 5b (strain 8401)).